The sequence spans 394 residues: Elongation factor Tu 2 (394 aa).

The tr-type G domain occupies 10 to 204; it reads KPHVNVGTIG…ALDSYIPEPE (195 aa). Residues 19-26 form a G1 region; the sequence is GHVDHGKT. Residue 19-26 participates in GTP binding; the sequence is GHVDHGKT. A Mg(2+)-binding site is contributed by threonine 26. Residues 60–64 form a G2 region; the sequence is GITIN. Residues 81-84 form a G3 region; the sequence is DCPG. GTP-binding positions include 81-85 and 136-139; these read DCPGH and NKCD. The tract at residues 136 to 139 is G4; sequence NKCD. Positions 174-176 are G5; sequence SAL.

Belongs to the TRAFAC class translation factor GTPase superfamily. Classic translation factor GTPase family. EF-Tu/EF-1A subfamily. As to quaternary structure, monomer.

The protein resides in the cytoplasm. It carries out the reaction GTP + H2O = GDP + phosphate + H(+). Its function is as follows. GTP hydrolase that promotes the GTP-dependent binding of aminoacyl-tRNA to the A-site of ribosomes during protein biosynthesis. The chain is Elongation factor Tu 2 from Shewanella sp. (strain MR-4).